Reading from the N-terminus, the 434-residue chain is ATP-dependent protease ATPase subunit HslU (434 aa).

ATP contacts are provided by residues valine 18, 60–65 (GVGKTE), aspartate 247, glutamate 312, and arginine 384.

It belongs to the ClpX chaperone family. HslU subfamily. In terms of assembly, a double ring-shaped homohexamer of HslV is capped on each side by a ring-shaped HslU homohexamer. The assembly of the HslU/HslV complex is dependent on binding of ATP.

The protein resides in the cytoplasm. In terms of biological role, ATPase subunit of a proteasome-like degradation complex; this subunit has chaperone activity. The binding of ATP and its subsequent hydrolysis by HslU are essential for unfolding of protein substrates subsequently hydrolyzed by HslV. HslU recognizes the N-terminal part of its protein substrates and unfolds these before they are guided to HslV for hydrolysis. The protein is ATP-dependent protease ATPase subunit HslU of Phenylobacterium zucineum (strain HLK1).